A 258-amino-acid chain; its full sequence is MKEILITNDDGYESEGLKKLIKMLTKEFKAKITIVAPASEKSACSHSITLTKPLRFVKVGKRFYKLDDGTPADCVYLALHALYKKRLPDLVISGINKGANVGEDITYSGTCAGAMEAVLQGIPAIALSQFYKKSEKELDYKNALQITKKIIQNIFDKGFPLEKKEFLNINFPAKSKIKGIKICKAGKRVYNFEAHSNVNPRGVEYYWLAAANLDFEDEKNSDIALLKKGYATITPIMLDLTAYERMKKVKKWLKANDE.

Asp9, Asp10, Ser42, and Asn96 together coordinate a divalent metal cation.

This sequence belongs to the SurE nucleotidase family. A divalent metal cation serves as cofactor.

The protein localises to the cytoplasm. It carries out the reaction a ribonucleoside 5'-phosphate + H2O = a ribonucleoside + phosphate. In terms of biological role, nucleotidase that shows phosphatase activity on nucleoside 5'-monophosphates. In Campylobacter jejuni subsp. jejuni serotype O:2 (strain ATCC 700819 / NCTC 11168), this protein is 5'-nucleotidase SurE.